The chain runs to 258 residues: Glutathione S-transferase DHAR3, chloroplastic (258 aa).

The N-terminal 42 residues, 1-42 (MISLRFQPSTTAGVLSASVSRAGFIKRCGSTKPGRVGRFVTM), are a transit peptide targeting the chloroplast. The residue at position 52 (Cys-52) is an S-glutathionyl cysteine. 2 residues coordinate glutathione: Lys-54 and Asp-65. L-ascorbate is bound by residues Lys-54 and Asp-65. The GST N-terminal domain occupies 56 to 129 (SITTPNKLGD…DVITQALEEK (74 aa)). The active-site Nucleophile is the Cys-66. A disulfide bridge connects residues Cys-66 and Cys-69. Residues 66-71 (CPFCQK) carry the Glutathione-binding motif. Residues Lys-93, Val-106, Ser-119, His-205, and Trp-252 each coordinate glutathione. Positions 130-258 (YPEPPLATPP…IAGWRPKVMG (129 aa)) constitute a GST C-terminal domain. Residue Lys-255 participates in L-ascorbate binding.

It belongs to the GST superfamily. DHAR family. In terms of assembly, monomer. Interacts with TRX3. Partial S-glutathionylation and intramolecular disulfide bond formation between Cys-66 and Cys-69 in the presence of oxidized glutathione (GSSG). Could be reduced by TRX-dependent process.

It is found in the plastid. It localises to the chloroplast stroma. It catalyses the reaction RX + glutathione = an S-substituted glutathione + a halide anion + H(+). It carries out the reaction L-dehydroascorbate + 2 glutathione = glutathione disulfide + L-ascorbate. In terms of biological role, displays a dual function. As a soluble protein, exhibits glutathione-dependent thiol transferase and dehydroascorbate (DHA) reductase activities. Key component of the ascorbate recycling system. Involved in the redox homeostasis, especially in scavenging of ROS under oxidative stresses. This is Glutathione S-transferase DHAR3, chloroplastic (DHAR3) from Arabidopsis thaliana (Mouse-ear cress).